A 404-amino-acid polypeptide reads, in one-letter code: AT-hook motif nuclear-localized protein 6 (404 aa).

Residues 40-112 form a disordered region; sequence TTVVTPLPPP…TPISSSIPLS (73 aa). Residues 45–55 are compositionally biased toward pro residues; that stretch reads PLPPPPAPSSA. Over residues 56 to 70 the composition is skewed to low complexity; the sequence is PVPTTVTPGSATAST. The short motif at 76–84 is the Bipartite nuclear localization signal element; it reads KKKRGRPRK. A DNA-binding region (a.T hook) is located at residues 76–88; sequence KKKRGRPRKYAPD. A compositionally biased stretch (low complexity) spans 98–112; that stretch reads PTLSPTPISSSIPLS. One can recognise a PPC domain in the interval 157–299; sequence GANFTTHQFT…RVMEAFAPPQ (143 aa). The segment at 365-404 is disordered; that stretch reads AYHGYGNMNTGTTHKEEHEDEDGGDDDDDSGDTRSQSHSG. Positions 382 to 394 are enriched in acidic residues; the sequence is HEDEDGGDDDDDS.

It localises to the nucleus. In terms of biological role, transcription factor that specifically binds AT-rich DNA sequences related to the nuclear matrix attachment regions (MARs). The chain is AT-hook motif nuclear-localized protein 6 from Arabidopsis thaliana (Mouse-ear cress).